A 94-amino-acid chain; its full sequence is Pyrimidine/purine nucleoside phosphorylase (94 aa).

This sequence belongs to the nucleoside phosphorylase PpnP family.

The enzyme catalyses a purine D-ribonucleoside + phosphate = a purine nucleobase + alpha-D-ribose 1-phosphate. It carries out the reaction adenosine + phosphate = alpha-D-ribose 1-phosphate + adenine. The catalysed reaction is cytidine + phosphate = cytosine + alpha-D-ribose 1-phosphate. It catalyses the reaction guanosine + phosphate = alpha-D-ribose 1-phosphate + guanine. The enzyme catalyses inosine + phosphate = alpha-D-ribose 1-phosphate + hypoxanthine. It carries out the reaction thymidine + phosphate = 2-deoxy-alpha-D-ribose 1-phosphate + thymine. The catalysed reaction is uridine + phosphate = alpha-D-ribose 1-phosphate + uracil. It catalyses the reaction xanthosine + phosphate = alpha-D-ribose 1-phosphate + xanthine. Functionally, catalyzes the phosphorolysis of diverse nucleosides, yielding D-ribose 1-phosphate and the respective free bases. Can use uridine, adenosine, guanosine, cytidine, thymidine, inosine and xanthosine as substrates. Also catalyzes the reverse reactions. The chain is Pyrimidine/purine nucleoside phosphorylase from Vibrio campbellii (strain ATCC BAA-1116).